A 735-amino-acid polypeptide reads, in one-letter code: Two pore calcium channel protein 1B (735 aa).

The Cytoplasmic segment spans residues 1 to 76; sequence MEEYLLPGES…ELYFMFTRFD (76 aa). The helical transmembrane segment at 77–97 threads the bilayer; the sequence is FLWSLNYLALVVLNFFEKPLW. The Extracellular segment spans residues 98-125; that stretch reads CSKHLAESCNNRDYYYLGELPFLTGAES. The chain crosses the membrane as a helical span at residues 126–146; sequence LIFEGVTLLLLIIHILFPISY. Over 147–161 the chain is Cytoplasmic; sequence EGFNLYWRSLLNRLK. A helical transmembrane segment spans residues 162–182; sequence VILLLILVADIVVYILLPADF. Tyrosine 183 is a topological domain (extracellular). A helical; Voltage-sensor transmembrane segment spans residues 184 to 202; it reads YLPFRIAPYLRVVFFILNI. Residues 203–208 lie on the Cytoplasmic side of the membrane; it reads RELRDS. A helical transmembrane segment spans residues 209-229; it reads FFILAGMLGTYLNVVALSALF. Residues 230–248 lie on the Extracellular side of the membrane; sequence LLFSSWLAYVFFEDTRQGK. Positions 249–263 form an intramembrane region, pore-forming; the sequence is TTFTSYGTTLYQMFV. The Extracellular portion of the chain corresponds to 264 to 286; the sequence is LFTTSNNPDVWIPAYKDSRWYCL. A helical membrane pass occupies residues 287–307; it reads FFVLYVLLGVYFVTNLILAVV. Topologically, residues 308-431 are cytoplasmic; it reads YDSFKSELVK…ASEKLRGFIR (124 aa). 2 consecutive EF-hand domains span residues 325-360 and 366-401; these read LRLRTLKKAFSLIDEANNGLLNEKQCTLLFEELNKY and ISGDDFKSIFNELDDTGDFKINLEEFADLCSAIGLR. Residues 432-452 form a helical membrane-spanning segment; it reads GATFEYIIVFVLLVNLVAVII. Topologically, residues 453–470 are extracellular; it reads ETTLDIQNNSGQTFWQKV. The N-linked (GlcNAc...) asparagine glycan is linked to asparagine 460. A helical membrane pass occupies residues 471–491; the sequence is EFTFGWLYVIEMALKVYTYGF. At 492–501 the chain is on the cytoplasmic side; the sequence is ENYWRDGQNR. A helical transmembrane segment spans residues 502–522; sequence FDFIVTWVIVIGETTTFVAPD. At 523-531 the chain is on the extracellular side; sequence DLTFLSNGE. Residues 532–549 form a helical; Voltage-sensor membrane-spanning segment; sequence WIRYLLIARMLRLIRLLM. Topologically, residues 550 to 560 are cytoplasmic; that stretch reads HVERYRAFVAT. A helical transmembrane segment spans residues 561 to 581; it reads FLTLIPSLMPYLGTIFCILCF. Residues 582-618 lie on the Extracellular side of the membrane; the sequence is YCSLGLQIFGGIVNTGNPNLAQTDLAGNDYLLFNFND. Positions 619 to 633 form an intramembrane region, pore-forming; it reads YPNGMVTLFNILVMG. The Extracellular portion of the chain corresponds to 634–654; it reads NWQVWMQSYKELTGTSWTYAY. A helical transmembrane segment spans residues 655-675; the sequence is FVSFYLISVLWLLNLIVAFVL. The Cytoplasmic portion of the chain corresponds to 676-735; that stretch reads EAFQAEMDLEASARCVDGDDKEAKRERRRNVGTKTRSQRVDFLLHHMLRSELTECSNDNP.

It belongs to the calcium channel alpha-1 subunit (TC 1.A.1.11) family. Two pore calcium channel subfamily. In terms of assembly, homodimer.

It is found in the membrane. With respect to regulation, inhibited by Al(3+), La(3+) and Gd(3+). Up-regulated by H(2)O(2), cryptogein, salicylic acid (SA) and cold shock. Functions as a voltage-gated inward-rectifying Ca(2+) channel (VDCC) across the plasma membrane that mediates sucrose-induced Ca(2+) influx in autotrophically grown leaf cells. Acts as the major ROS-responsive Ca(2+) channel and is the possible target of Al-dependent inhibition. Plays a regulatory role in defense responses. The protein is Two pore calcium channel protein 1B (TPC1B) of Nicotiana tabacum (Common tobacco).